A 597-amino-acid chain; its full sequence is Centrosomal protein of 70 kDa (597 aa).

Residues 1–23 (MFPVAPKPQDSSQASDRLMTEKQ) form a disordered region. 2 coiled-coil regions span residues 66–179 (MRQN…QMEV) and 254–326 (TYKG…KKAE). The TPR repeat unit spans residues 483 to 516 (NGVYPRMNEVYTRLGEMNNAVRNLQELLELDSSS).

In terms of assembly, directly interacts with tubulin-gamma; this interaction determines centrosomal localization.

It localises to the cytoplasm. The protein localises to the cytoskeleton. It is found in the microtubule organizing center. The protein resides in the centrosome. Functionally, plays a role in the organization of both preexisting and nascent microtubules in interphase cells. During mitosis, required for the organization and orientation of the mitotic spindle. The sequence is that of Centrosomal protein of 70 kDa (CEP70) from Pongo abelii (Sumatran orangutan).